A 350-amino-acid chain; its full sequence is Biotin synthase (350 aa).

The Radical SAM core domain maps to 63-281 (GDIELATLLS…IAVARITMPK (219 aa)). [4Fe-4S] cluster-binding residues include cysteine 78, cysteine 82, and cysteine 85. Residues cysteine 122, cysteine 153, cysteine 213, and arginine 285 each coordinate [2Fe-2S] cluster.

The protein belongs to the radical SAM superfamily. Biotin synthase family. As to quaternary structure, homodimer. It depends on [4Fe-4S] cluster as a cofactor. [2Fe-2S] cluster serves as cofactor.

The catalysed reaction is (4R,5S)-dethiobiotin + (sulfur carrier)-SH + 2 reduced [2Fe-2S]-[ferredoxin] + 2 S-adenosyl-L-methionine = (sulfur carrier)-H + biotin + 2 5'-deoxyadenosine + 2 L-methionine + 2 oxidized [2Fe-2S]-[ferredoxin]. The protein operates within cofactor biosynthesis; biotin biosynthesis; biotin from 7,8-diaminononanoate: step 2/2. Catalyzes the conversion of dethiobiotin (DTB) to biotin by the insertion of a sulfur atom into dethiobiotin via a radical-based mechanism. This is Biotin synthase from Acidovorax sp. (strain JS42).